The primary structure comprises 365 residues: Aspartate-semialdehyde dehydrogenase (365 aa).

8 residues coordinate NADP(+): T12, G13, S14, V15, S37, S40, L85, and D86. Residue C156 is the Acyl-thioester intermediate of the active site. G188 is an NADP(+) binding site. Catalysis depends on H256, which acts as the Proton acceptor. Residue N343 participates in NADP(+) binding.

Belongs to the aspartate-semialdehyde dehydrogenase family. Homotetramer; dimer of dimers.

It localises to the cytoplasm. It is found in the cytosol. The protein resides in the nucleus. It carries out the reaction L-aspartate 4-semialdehyde + phosphate + NADP(+) = 4-phospho-L-aspartate + NADPH + H(+). It functions in the pathway amino-acid biosynthesis; L-methionine biosynthesis via de novo pathway; L-homoserine from L-aspartate: step 2/3. The protein operates within amino-acid biosynthesis; L-threonine biosynthesis; L-threonine from L-aspartate: step 2/5. Its activity is regulated as follows. Inhibited by the non-competitive inhibitors phthalaldehyde and naphthalene, the competitive inhibitor 1,4-benzoquinone and derivates such as 2-chloro-3-methoxy-1,4-naphthoquinone, 2,3-dichloro-1,4-naphthoquinone, 2-chloro-1,4-naphthoquinone, 2-bromo-1,4-naphthoquinone and 2,3-dichloro-5,8-dihydroxy-1,4-naphthoquinone, and 5-aminoisoquinoline. Inhibited by vinyl sulfones. Its function is as follows. Catalyzes the NADPH-dependent formation of L-aspartate 4-semialdehyde (L-ASA) by the reductive dephosphorylation of 4-phospho-L-aspartate. Mediates the second step in the biosynthesis of amino acids that derive from aspartate (the aspartate family of amino acids), including methioinine and threonine, the latter of which is a precursor to isoleucine. This is Aspartate-semialdehyde dehydrogenase from Candida albicans (strain SC5314 / ATCC MYA-2876) (Yeast).